We begin with the raw amino-acid sequence, 301 residues long: Probable alpha-L-glutamate ligase (301 aa).

An ATP-grasp domain is found at 104-287; it reads LQLLSRRGIG…VAGIIIEHLE (184 aa). Residues Lys141, 178–179, Asp187, and 211–213 each bind ATP; these read EY and RSN. Mg(2+) is bound by residues Asp248, Glu260, and Asn262. 3 residues coordinate Mn(2+): Asp248, Glu260, and Asn262.

The protein belongs to the RimK family. Mg(2+) serves as cofactor. Mn(2+) is required as a cofactor.

This is Probable alpha-L-glutamate ligase from Pseudomonas fluorescens (strain SBW25).